The following is a 317-amino-acid chain: Acetyl-coenzyme A carboxylase carboxyl transferase subunit alpha (317 aa).

The 256-residue stretch at Arg-37 to Asp-292 folds into the CoA carboxyltransferase C-terminal domain.

Belongs to the AccA family. As to quaternary structure, acetyl-CoA carboxylase is a heterohexamer composed of biotin carboxyl carrier protein (AccB), biotin carboxylase (AccC) and two subunits each of ACCase subunit alpha (AccA) and ACCase subunit beta (AccD).

The protein resides in the cytoplasm. It carries out the reaction N(6)-carboxybiotinyl-L-lysyl-[protein] + acetyl-CoA = N(6)-biotinyl-L-lysyl-[protein] + malonyl-CoA. Its pathway is lipid metabolism; malonyl-CoA biosynthesis; malonyl-CoA from acetyl-CoA: step 1/1. Its function is as follows. Component of the acetyl coenzyme A carboxylase (ACC) complex. First, biotin carboxylase catalyzes the carboxylation of biotin on its carrier protein (BCCP) and then the CO(2) group is transferred by the carboxyltransferase to acetyl-CoA to form malonyl-CoA. The sequence is that of Acetyl-coenzyme A carboxylase carboxyl transferase subunit alpha from Syntrophotalea carbinolica (strain DSM 2380 / NBRC 103641 / GraBd1) (Pelobacter carbinolicus).